Reading from the N-terminus, the 517-residue chain is 2-isopropylmalate synthase (517 aa).

One can recognise a Pyruvate carboxyltransferase domain in the interval 5 to 268 (IIIFDTTLRD…DTRINTQEIH (264 aa)). Residues aspartate 14, histidine 202, histidine 204, and asparagine 238 each contribute to the Mn(2+) site. Positions 393–517 (SLDVITSQTI…ADLKSHKISQ (125 aa)) are regulatory domain.

The protein belongs to the alpha-IPM synthase/homocitrate synthase family. LeuA type 1 subfamily. Homodimer. Mn(2+) is required as a cofactor.

It is found in the cytoplasm. The enzyme catalyses 3-methyl-2-oxobutanoate + acetyl-CoA + H2O = (2S)-2-isopropylmalate + CoA + H(+). It functions in the pathway amino-acid biosynthesis; L-leucine biosynthesis; L-leucine from 3-methyl-2-oxobutanoate: step 1/4. In terms of biological role, catalyzes the condensation of the acetyl group of acetyl-CoA with 3-methyl-2-oxobutanoate (2-ketoisovalerate) to form 3-carboxy-3-hydroxy-4-methylpentanoate (2-isopropylmalate). The chain is 2-isopropylmalate synthase from Histophilus somni (strain 2336) (Haemophilus somnus).